A 322-amino-acid polypeptide reads, in one-letter code: CMP-sialic acid transporter 1 (322 aa).

Over methionine 1–glutamine 2 the chain is Cytoplasmic. Residues tryptophan 3–leucine 23 traverse the membrane as a helical segment. The Lumenal portion of the chain corresponds to serine 24–aspartate 33. The chain crosses the membrane as a helical span at residues tyrosine 34 to tryptophan 54. Residues lysine 55 to tyrosine 75 lie on the Cytoplasmic side of the membrane. The chain crosses the membrane as a helical span at residues leucine 76 to valine 96. Residues aspartate 97–threonine 100 lie on the Lumenal side of the membrane. Residues tyrosine 101–leucine 120 traverse the membrane as a helical segment. Topologically, residues lysine 121–asparagine 126 are cytoplasmic. Residues leucine 127–valine 144 traverse the membrane as a helical segment. Residues lysine 145 to serine 157 are Lumenal-facing. A helical transmembrane segment spans residues alanine 158–valine 178. Residues tyrosine 179–leucine 198 are Cytoplasmic-facing. The chain crosses the membrane as a helical span at residues tyrosine 199–phenylalanine 219. At glutamate 220–serine 233 the chain is on the lumenal side. The chain crosses the membrane as a helical span at residues isoleucine 234–methionine 254. Topologically, residues lysine 255–lysine 262 are cytoplasmic. Residues valine 263 to valine 283 traverse the membrane as a helical segment. Over arginine 284–threonine 286 the chain is Lumenal.

This sequence belongs to the nucleotide-sugar transporter family. CMP-Sialate:CMP antiporter (TC 2.A.7.12) subfamily.

It is found in the golgi apparatus membrane. Its function is as follows. Sugar transporter involved in the transport of CMP-sialic acid from the cytoplasm into the Golgi. May transport important nucleotide sugars such as CMP-Kdo (2-keto-3-deoxy-D-manno-octulosonic acid) in physiological conditions. The chain is CMP-sialic acid transporter 1 from Oryza sativa subsp. indica (Rice).